The sequence spans 215 residues: ATP phosphoribosyltransferase (215 aa).

It belongs to the ATP phosphoribosyltransferase family. Short subfamily. As to quaternary structure, heteromultimer composed of HisG and HisZ subunits.

It localises to the cytoplasm. The enzyme catalyses 1-(5-phospho-beta-D-ribosyl)-ATP + diphosphate = 5-phospho-alpha-D-ribose 1-diphosphate + ATP. It functions in the pathway amino-acid biosynthesis; L-histidine biosynthesis; L-histidine from 5-phospho-alpha-D-ribose 1-diphosphate: step 1/9. Functionally, catalyzes the condensation of ATP and 5-phosphoribose 1-diphosphate to form N'-(5'-phosphoribosyl)-ATP (PR-ATP). Has a crucial role in the pathway because the rate of histidine biosynthesis seems to be controlled primarily by regulation of HisG enzymatic activity. This chain is ATP phosphoribosyltransferase, found in Gloeothece citriformis (strain PCC 7424) (Cyanothece sp. (strain PCC 7424)).